The chain runs to 199 residues: 7-methyl-GTP pyrophosphatase (199 aa).

The Proton acceptor role is filled by Asp-74.

The protein belongs to the Maf family. YceF subfamily. The cofactor is a divalent metal cation.

Its subcellular location is the cytoplasm. It carries out the reaction N(7)-methyl-GTP + H2O = N(7)-methyl-GMP + diphosphate + H(+). In terms of biological role, nucleoside triphosphate pyrophosphatase that hydrolyzes 7-methyl-GTP (m(7)GTP). May have a dual role in cell division arrest and in preventing the incorporation of modified nucleotides into cellular nucleic acids. The sequence is that of 7-methyl-GTP pyrophosphatase from Cupriavidus metallidurans (strain ATCC 43123 / DSM 2839 / NBRC 102507 / CH34) (Ralstonia metallidurans).